The primary structure comprises 513 residues: Sphingolipid C9-methyltransferase (513 aa).

The next 2 helical transmembrane spans lie at 52 to 72 and 74 to 94; these read ILFS…GLGF and TWVF…WSIM. Residues 222-223, 259-267, 285-290, and 315-316 each bind S-adenosyl-L-methionine; these read YT, VLDIGCGWG, TLGRNQ, and YR.

The protein belongs to the CFA/CMAS family.

Its subcellular location is the membrane. The enzyme catalyses a (4E,8E)-4-sphinga-4,8-dienine ceramide + S-adenosyl-L-methionine = a 9-methyl-(4E,8E)-sphinga-4,8-dienine ceramide + S-adenosyl-L-homocysteine + H(+). Its pathway is lipid metabolism; sphingolipid metabolism. Its function is as follows. Catalyzes methylation of the sphingoid base component of glucosylceramides (GluCers) at the C9-position. Sphingolipid C9-methylation requires 4,8-desaturated ceramides as substrates. Glucosylceramides play important roles in growth, differentiation and pathogenicity. The methyl group at the C9-position distinguishes fungal glucosylceramides from those of plants and animals, and may thus play a role in host-pathogen interactions enabling the host to recognize the fungal attack and initiate specific defense responses. Not necessary for vegetative growth at low temperatures, but plays a role in hyphal formation on solid medium. This Candida albicans (strain SC5314 / ATCC MYA-2876) (Yeast) protein is Sphingolipid C9-methyltransferase.